Reading from the N-terminus, the 258-residue chain is Imidazole glycerol phosphate synthase subunit HisF (258 aa).

Residues Asp-11 and Asp-130 contribute to the active site.

The protein belongs to the HisA/HisF family. As to quaternary structure, heterodimer of HisH and HisF.

Its subcellular location is the cytoplasm. It catalyses the reaction 5-[(5-phospho-1-deoxy-D-ribulos-1-ylimino)methylamino]-1-(5-phospho-beta-D-ribosyl)imidazole-4-carboxamide + L-glutamine = D-erythro-1-(imidazol-4-yl)glycerol 3-phosphate + 5-amino-1-(5-phospho-beta-D-ribosyl)imidazole-4-carboxamide + L-glutamate + H(+). The protein operates within amino-acid biosynthesis; L-histidine biosynthesis; L-histidine from 5-phospho-alpha-D-ribose 1-diphosphate: step 5/9. Its function is as follows. IGPS catalyzes the conversion of PRFAR and glutamine to IGP, AICAR and glutamate. The HisF subunit catalyzes the cyclization activity that produces IGP and AICAR from PRFAR using the ammonia provided by the HisH subunit. The protein is Imidazole glycerol phosphate synthase subunit HisF of Serratia proteamaculans (strain 568).